The primary structure comprises 134 residues: NADH-quinone oxidoreductase subunit A (134 aa).

The next 3 membrane-spanning stretches (helical) occupy residues 12–32, 64–84, and 93–113; these read FAIY…LAAL, FYLV…LFAW, and WVGF…LVYL.

This sequence belongs to the complex I subunit 3 family. NDH-1 is composed of 13 different subunits. Subunits NuoA, H, J, K, L, M, N constitute the membrane sector of the complex.

It is found in the cell inner membrane. It carries out the reaction a quinone + NADH + 5 H(+)(in) = a quinol + NAD(+) + 4 H(+)(out). In terms of biological role, NDH-1 shuttles electrons from NADH, via FMN and iron-sulfur (Fe-S) centers, to quinones in the respiratory chain. The immediate electron acceptor for the enzyme in this species is believed to be ubiquinone. Couples the redox reaction to proton translocation (for every two electrons transferred, four hydrogen ions are translocated across the cytoplasmic membrane), and thus conserves the redox energy in a proton gradient. The sequence is that of NADH-quinone oxidoreductase subunit A from Shewanella oneidensis (strain ATCC 700550 / JCM 31522 / CIP 106686 / LMG 19005 / NCIMB 14063 / MR-1).